A 212-amino-acid chain; its full sequence is tRNA (guanine-N(7)-)-methyltransferase (212 aa).

Glu-44, Asp-69, Asp-96, and Asp-118 together coordinate S-adenosyl-L-methionine. Asp-118 is a catalytic residue. Lys-122 serves as a coordination point for substrate. Residues 124-129 (RHEKRR) form an interaction with RNA region. Substrate-binding positions include Asp-154 and 191-194 (TEYE).

It belongs to the class I-like SAM-binding methyltransferase superfamily. TrmB family.

The enzyme catalyses guanosine(46) in tRNA + S-adenosyl-L-methionine = N(7)-methylguanosine(46) in tRNA + S-adenosyl-L-homocysteine. It functions in the pathway tRNA modification; N(7)-methylguanine-tRNA biosynthesis. Its function is as follows. Catalyzes the formation of N(7)-methylguanine at position 46 (m7G46) in tRNA. The polypeptide is tRNA (guanine-N(7)-)-methyltransferase (Streptococcus gordonii (strain Challis / ATCC 35105 / BCRC 15272 / CH1 / DL1 / V288)).